A 107-amino-acid chain; its full sequence is MTYVVTDECVKCKYTDCVEVCPVDCFYEGEFMLVINPDECIDCGVCVPDCPIDAIKPETPELIEWVERAKHFIEHEKWQVITKKKPALPDADKFKDEKDKFNKYIGV.

4Fe-4S ferredoxin-type domains are found at residues 2–30 (TYVV…YEGE) and 31–60 (FMLV…PETP). [3Fe-4S] cluster contacts are provided by C9 and C17. Positions 21, 40, 43, and 46 each coordinate [4Fe-4S] cluster. Residue C50 participates in [3Fe-4S] cluster binding.

[4Fe-4S] cluster serves as cofactor. Requires [3Fe-4S] cluster as cofactor.

Ferredoxins are iron-sulfur proteins that transfer electrons in a wide variety of metabolic reactions. This is Ferredoxin (fdxA) from Rickettsia bellii (strain RML369-C).